A 221-amino-acid polypeptide reads, in one-letter code: Orotate phosphoribosyltransferase (221 aa).

K26 contacts 5-phospho-alpha-D-ribose 1-diphosphate. 34 to 35 (FF) provides a ligand contact to orotate. 5-phospho-alpha-D-ribose 1-diphosphate-binding positions include 72-73 (YK), R98, K99, K102, H104, and 123-131 (DDVISAGTS). S127 and R155 together coordinate orotate.

This sequence belongs to the purine/pyrimidine phosphoribosyltransferase family. PyrE subfamily. In terms of assembly, homodimer. Mg(2+) serves as cofactor.

The catalysed reaction is orotidine 5'-phosphate + diphosphate = orotate + 5-phospho-alpha-D-ribose 1-diphosphate. Its pathway is pyrimidine metabolism; UMP biosynthesis via de novo pathway; UMP from orotate: step 1/2. Functionally, catalyzes the transfer of a ribosyl phosphate group from 5-phosphoribose 1-diphosphate to orotate, leading to the formation of orotidine monophosphate (OMP). The chain is Orotate phosphoribosyltransferase from Janthinobacterium sp. (strain Marseille) (Minibacterium massiliensis).